The following is a 389-amino-acid chain: Chalcone synthase 2 (389 aa).

The active site involves Cys164.

It belongs to the thiolase-like superfamily. Chalcone/stilbene synthases family.

It carries out the reaction (E)-4-coumaroyl-CoA + 3 malonyl-CoA + 3 H(+) = 2',4,4',6'-tetrahydroxychalcone + 3 CO2 + 4 CoA. The protein operates within secondary metabolite biosynthesis; flavonoid biosynthesis. Its function is as follows. The primary product of this enzyme is 4,2',4',6'-tetrahydroxychalcone (also termed naringenin-chalcone or chalcone) which can under specific conditions spontaneously isomerize into naringenin. This Solanum lycopersicum (Tomato) protein is Chalcone synthase 2 (CHS2).